The following is a 433-amino-acid chain: GTPase Obg (433 aa).

Residues 1–159 (MGLTDYCECR…LHVSLEIKYL (159 aa)) enclose the Obg domain. In terms of domain architecture, OBG-type G spans 160-329 (ANVGIVGFPN…LVAQVFALHQ (170 aa)). Residues 166 to 173 (GFPNTGKS), 191 to 195 (FTTLV), 212 to 215 (DIPG), 282 to 285 (NKTD), and 310 to 312 (ISA) each bind GTP. 2 residues coordinate Mg(2+): S173 and T193. In terms of domain architecture, OCT spans 355 to 433 (ASETDHDPLN…FAGQEFVIND (79 aa)).

The protein belongs to the TRAFAC class OBG-HflX-like GTPase superfamily. OBG GTPase family. As to quaternary structure, monomer. Requires Mg(2+) as cofactor.

The protein resides in the cytoplasm. Functionally, an essential GTPase which binds GTP, GDP and possibly (p)ppGpp with moderate affinity, with high nucleotide exchange rates and a fairly low GTP hydrolysis rate. Plays a role in control of the cell cycle, stress response, ribosome biogenesis and in those bacteria that undergo differentiation, in morphogenesis control. This Mycoplasma pneumoniae (strain ATCC 29342 / M129 / Subtype 1) (Mycoplasmoides pneumoniae) protein is GTPase Obg.